The sequence spans 82 residues: Small ribosomal subunit protein uS17 (82 aa).

It belongs to the universal ribosomal protein uS17 family. As to quaternary structure, part of the 30S ribosomal subunit.

Functionally, one of the primary rRNA binding proteins, it binds specifically to the 5'-end of 16S ribosomal RNA. In Afipia carboxidovorans (strain ATCC 49405 / DSM 1227 / KCTC 32145 / OM5) (Oligotropha carboxidovorans), this protein is Small ribosomal subunit protein uS17.